Here is a 75-residue protein sequence, read N- to C-terminus: Conotoxin Vt15.1 (75 aa).

The first 19 residues, Met1–Gly19, serve as a signal peptide directing secretion. Residues Gln20 to Val43 constitute a propeptide that is removed on maturation. The residue at position 73 (Trp73) is a Tryptophan amide.

It belongs to the conotoxin V superfamily. In terms of processing, contains 4 disulfide bonds. In terms of tissue distribution, expressed by the venom duct.

The protein resides in the secreted. In Conus planorbis (Planorbis cone), this protein is Conotoxin Vt15.1.